A 210-amino-acid chain; its full sequence is ATP-dependent Clp protease proteolytic subunit (210 aa).

Catalysis depends on serine 107, which acts as the Nucleophile. The active site involves histidine 132.

This sequence belongs to the peptidase S14 family. As to quaternary structure, fourteen ClpP subunits assemble into 2 heptameric rings which stack back to back to give a disk-like structure with a central cavity, resembling the structure of eukaryotic proteasomes.

It localises to the cytoplasm. It catalyses the reaction Hydrolysis of proteins to small peptides in the presence of ATP and magnesium. alpha-casein is the usual test substrate. In the absence of ATP, only oligopeptides shorter than five residues are hydrolyzed (such as succinyl-Leu-Tyr-|-NHMec, and Leu-Tyr-Leu-|-Tyr-Trp, in which cleavage of the -Tyr-|-Leu- and -Tyr-|-Trp bonds also occurs).. Cleaves peptides in various proteins in a process that requires ATP hydrolysis. Has a chymotrypsin-like activity. Plays a major role in the degradation of misfolded proteins. The protein is ATP-dependent Clp protease proteolytic subunit of Chromobacterium violaceum (strain ATCC 12472 / DSM 30191 / JCM 1249 / CCUG 213 / NBRC 12614 / NCIMB 9131 / NCTC 9757 / MK).